Reading from the N-terminus, the 461-residue chain is Bifunctional enzyme LpxC/FabZ (461 aa).

The interval 1–302 (MLKQKTLKDS…FARQMRKEIR (302 aa)) is UDP-3-O-acyl-N-acetylglucosamine deacetylase. Zn(2+) is bound by residues His78, His260, and Asp264. Residue His287 is the Proton donor of the active site. The interval 303–461 (LHEIQAPTYD…EFMAQIVKNK (159 aa)) is 3-hydroxyacyl-[acyl-carrier-protein] dehydratase. The active site involves His364.

In the N-terminal section; belongs to the LpxC family. This sequence in the C-terminal section; belongs to the thioester dehydratase family. Requires Zn(2+) as cofactor.

Its subcellular location is the cytoplasm. The catalysed reaction is a UDP-3-O-[(3R)-3-hydroxyacyl]-N-acetyl-alpha-D-glucosamine + H2O = a UDP-3-O-[(3R)-3-hydroxyacyl]-alpha-D-glucosamine + acetate. The enzyme catalyses a (3R)-hydroxyacyl-[ACP] = a (2E)-enoyl-[ACP] + H2O. The protein operates within glycolipid biosynthesis; lipid IV(A) biosynthesis; lipid IV(A) from (3R)-3-hydroxytetradecanoyl-[acyl-carrier-protein] and UDP-N-acetyl-alpha-D-glucosamine: step 2/6. Functionally, catalyzes the hydrolysis of UDP-3-O-myristoyl-N-acetylglucosamine to form UDP-3-O-myristoylglucosamine and acetate, the committed step in lipid A biosynthesis. Its function is as follows. Involved in unsaturated fatty acids biosynthesis. Catalyzes the dehydration of short chain beta-hydroxyacyl-ACPs and long chain saturated and unsaturated beta-hydroxyacyl-ACPs. The chain is Bifunctional enzyme LpxC/FabZ (lpxC/fabZ) from Bacteroides thetaiotaomicron (strain ATCC 29148 / DSM 2079 / JCM 5827 / CCUG 10774 / NCTC 10582 / VPI-5482 / E50).